Reading from the N-terminus, the 325-residue chain is NADH-quinone oxidoreductase subunit H (325 aa).

8 helical membrane passes run 11–31 (ILLT…CGAF), 81–101 (VIFT…FAIV), 114–134 (IGIL…LFAG), 154–174 (LSYE…AGSF), 186–206 (VWNV…GVAV), 237–257 (FFVG…TLFF), 265–285 (LPPF…FILI), and 304–324 (ICLP…LWQA).

This sequence belongs to the complex I subunit 1 family. In terms of assembly, NDH-1 is composed of 13 different subunits. Subunits NuoA, H, J, K, L, M, N constitute the membrane sector of the complex.

It localises to the cell inner membrane. It carries out the reaction a quinone + NADH + 5 H(+)(in) = a quinol + NAD(+) + 4 H(+)(out). NDH-1 shuttles electrons from NADH, via FMN and iron-sulfur (Fe-S) centers, to quinones in the respiratory chain. The immediate electron acceptor for the enzyme in this species is believed to be ubiquinone. Couples the redox reaction to proton translocation (for every two electrons transferred, four hydrogen ions are translocated across the cytoplasmic membrane), and thus conserves the redox energy in a proton gradient. This subunit may bind ubiquinone. This chain is NADH-quinone oxidoreductase subunit H, found in Escherichia coli O7:K1 (strain IAI39 / ExPEC).